A 632-amino-acid chain; its full sequence is ATP-dependent zinc metalloprotease FtsH (632 aa).

The Cytoplasmic portion of the chain corresponds to 1-9 (MKPTNEPKK). The helical transmembrane segment at 10–30 (PFFQSPIVLAVLGGILLIFFL) threads the bilayer. Topologically, residues 31 to 116 (RSFNSDGSFS…INYSGFSESN (86 aa)) are periplasmic. Residues 117 to 137 (FFTDMLGWLMPILVILGLWMF) traverse the membrane as a helical segment. Residues 138-632 (MANRMQKNMG…RLIPLEEQAS (495 aa)) are Cytoplasmic-facing. 210-217 (GPPGTGKT) is a binding site for ATP. His-434 serves as a coordination point for Zn(2+). Residue Glu-435 is part of the active site. His-438 and Asp-511 together coordinate Zn(2+).

This sequence in the central section; belongs to the AAA ATPase family. It in the C-terminal section; belongs to the peptidase M41 family. In terms of assembly, homohexamer. Requires Zn(2+) as cofactor.

The protein resides in the cell inner membrane. In terms of biological role, acts as a processive, ATP-dependent zinc metallopeptidase for both cytoplasmic and membrane proteins. Plays a role in the quality control of integral membrane proteins. The sequence is that of ATP-dependent zinc metalloprotease FtsH from Helicobacter pylori (strain J99 / ATCC 700824) (Campylobacter pylori J99).